We begin with the raw amino-acid sequence, 596 residues long: Fructan 1-exohydrolase w3 (596 aa).

Positions Met1 to Ser20 are cleaved as a signal peptide. Asp75 is a catalytic residue. Residues Asn168, Asn236, and Asn248 are each glycosylated (N-linked (GlcNAc...) asparagine). A disulfide bridge links Cys446 with Cys492.

The protein belongs to the glycosyl hydrolase 32 family. As to expression, expressed in the stem, particularly the penultimate internode. Little expression is detected in roots and in the peduncle part of the stem.

It catalyses the reaction Hydrolysis of terminal, non-reducing (2-&gt;1)-linked beta-D-fructofuranose residues in fructans.. Inhibited by sucrose. Hydrolyzes inulin-type beta-(2,1)-fructans and beta-(2,1)-linkages in branched fructans. Has low activity against beta-(2,6)-linked fructans. May play a role as a beta-(2,1)-trimmer during graminan biosynthesis. This chain is Fructan 1-exohydrolase w3, found in Triticum aestivum (Wheat).